Reading from the N-terminus, the 223-residue chain is UPF0758 protein FMG_0357 (223 aa).

In terms of domain architecture, MPN spans 101–223 (SLNDPDSVAE…SLSMRKGMYF (123 aa)). His172, His174, and Asp185 together coordinate Zn(2+). Residues 172–185 (HNHPSGSLIPSNAD) carry the JAMM motif motif.

It belongs to the UPF0758 family.

The polypeptide is UPF0758 protein FMG_0357 (Finegoldia magna (strain ATCC 29328 / DSM 20472 / WAL 2508) (Peptostreptococcus magnus)).